Consider the following 272-residue polypeptide: Probable ribonuclease HI_0526 (272 aa).

The N-terminal stretch at 1–23 (MKKLTSILSLIVLVILAIWQYFT) is a signal peptide. Residues H148, E195, and H199 contribute to the active site.

The protein belongs to the RNase T2 family.

This chain is Probable ribonuclease HI_0526, found in Haemophilus influenzae (strain ATCC 51907 / DSM 11121 / KW20 / Rd).